The primary structure comprises 57 residues: MIREHLLKEIEKKRAELLQIVMANGMTSHITIELSQELDHLLIQYQKQRLRAVAGDE.

This sequence belongs to the spo0E family.

Aspartyl-phosphate phosphatase which specifically dephosphorylates the sporulation transcription factor Spo0A-P and negatively regulates the sporulation initiation pathway in order to control the proper timing of sporulation. This chain is Aspartyl-phosphate phosphatase YnzD (ynzD), found in Bacillus subtilis (strain 168).